Consider the following 133-residue polypeptide: Small ribosomal subunit protein uS8c (133 aa).

This sequence belongs to the universal ribosomal protein uS8 family. As to quaternary structure, part of the 30S ribosomal subunit.

It is found in the plastid. The protein localises to the chloroplast. In terms of biological role, one of the primary rRNA binding proteins, it binds directly to 16S rRNA central domain where it helps coordinate assembly of the platform of the 30S subunit. This is Small ribosomal subunit protein uS8c (rps8) from Mesostigma viride (Green alga).